The sequence spans 123 residues: Small ribosomal subunit protein uS12 (123 aa).

The residue at position 89 (D89) is a 3-methylthioaspartic acid.

It belongs to the universal ribosomal protein uS12 family. In terms of assembly, part of the 30S ribosomal subunit. Contacts proteins S8 and S17. May interact with IF1 in the 30S initiation complex.

In terms of biological role, with S4 and S5 plays an important role in translational accuracy. Interacts with and stabilizes bases of the 16S rRNA that are involved in tRNA selection in the A site and with the mRNA backbone. Located at the interface of the 30S and 50S subunits, it traverses the body of the 30S subunit contacting proteins on the other side and probably holding the rRNA structure together. The combined cluster of proteins S8, S12 and S17 appears to hold together the shoulder and platform of the 30S subunit. In Rhizobium leguminosarum bv. trifolii (strain WSM2304), this protein is Small ribosomal subunit protein uS12.